Reading from the N-terminus, the 303-residue chain is Proteasome subunit beta (303 aa).

A propeptide spans 1 to 64 (removed in mature form; by autocatalysis); the sequence is MTWPDRDTSA…VTPSDAVPHG (64 aa). The Nucleophile role is filled by T65.

Belongs to the peptidase T1B family. As to quaternary structure, the 20S proteasome core is composed of 14 alpha and 14 beta subunits that assemble into four stacked heptameric rings, resulting in a barrel-shaped structure. The two inner rings, each composed of seven catalytic beta subunits, are sandwiched by two outer rings, each composed of seven alpha subunits. The catalytic chamber with the active sites is on the inside of the barrel. Has a gated structure, the ends of the cylinder being occluded by the N-termini of the alpha-subunits. Is capped by the proteasome-associated ATPase, ARC.

The protein resides in the cytoplasm. It catalyses the reaction Cleavage of peptide bonds with very broad specificity.. It functions in the pathway protein degradation; proteasomal Pup-dependent pathway. Its activity is regulated as follows. The formation of the proteasomal ATPase ARC-20S proteasome complex, likely via the docking of the C-termini of ARC into the intersubunit pockets in the alpha-rings, may trigger opening of the gate for substrate entry. Interconversion between the open-gate and close-gate conformations leads to a dynamic regulation of the 20S proteasome proteolysis activity. In terms of biological role, component of the proteasome core, a large protease complex with broad specificity involved in protein degradation. The protein is Proteasome subunit beta of Mycolicibacterium gilvum (strain PYR-GCK) (Mycobacterium gilvum (strain PYR-GCK)).